Here is a 191-residue protein sequence, read N- to C-terminus: Elongation factor P (191 aa).

The residue at position 34 (Lys-34) is an N6-(3,6-diaminohexanoyl)-5-hydroxylysine.

The protein belongs to the elongation factor P family. May be beta-lysylated on the epsilon-amino group of Lys-34 by the combined action of EpmA and EpmB, and then hydroxylated on the C5 position of the same residue by EpmC (if this protein is present). Lysylation is critical for the stimulatory effect of EF-P on peptide-bond formation. The lysylation moiety may extend toward the peptidyltransferase center and stabilize the terminal 3-CCA end of the tRNA. Hydroxylation of the C5 position on Lys-34 may allow additional potential stabilizing hydrogen-bond interactions with the P-tRNA.

The protein resides in the cytoplasm. The protein operates within protein biosynthesis; polypeptide chain elongation. Involved in peptide bond synthesis. Alleviates ribosome stalling that occurs when 3 or more consecutive Pro residues or the sequence PPG is present in a protein, possibly by augmenting the peptidyl transferase activity of the ribosome. Modification of Lys-34 is required for alleviation. This Marinomonas sp. (strain MWYL1) protein is Elongation factor P.